A 603-amino-acid chain; its full sequence is uncharacterized protein (603 aa).

One can recognise a PE domain in the interval Met-1–Ala-93. Positions Gly-309–Glu-333 are disordered.

Belongs to the mycobacterial PE family. PGRS subfamily.

This is an uncharacterized protein from Mycobacterium tuberculosis (strain CDC 1551 / Oshkosh).